We begin with the raw amino-acid sequence, 855 residues long: Valine--tRNA ligase (855 aa).

Residues 44–54 carry the 'HIGH' region motif; the sequence is PNVTGVLHIGH. Residues 524-528 carry the 'KMSKS' region motif; it reads KMSKT. Lysine 527 is an ATP binding site. Residues 797–827 are a coiled coil; it reads KVEEDPARKQKEREQLEKNIANSKRQLGDEV.

This sequence belongs to the class-I aminoacyl-tRNA synthetase family. ValS type 1 subfamily. In terms of assembly, monomer.

It localises to the cytoplasm. The catalysed reaction is tRNA(Val) + L-valine + ATP = L-valyl-tRNA(Val) + AMP + diphosphate. Its function is as follows. Catalyzes the attachment of valine to tRNA(Val). As ValRS can inadvertently accommodate and process structurally similar amino acids such as threonine, to avoid such errors, it has a 'posttransfer' editing activity that hydrolyzes mischarged Thr-tRNA(Val) in a tRNA-dependent manner. The polypeptide is Valine--tRNA ligase (Solibacter usitatus (strain Ellin6076)).